Consider the following 239-residue polypeptide: Ribonuclease Le2 (239 aa).

5 disulfide bridges follow: C5–C22, C13–C58, C21–C126, C66–C118, and C191–C225. Residues H51, E111, and H115 contribute to the active site.

Belongs to the RNase T2 family.

It carries out the reaction a ribonucleotidyl-ribonucleotide-RNA + H2O = a 3'-end 3'-phospho-ribonucleotide-RNA + a 5'-end dephospho-ribonucleoside-RNA + H(+). Functionally, this is a base non-specific and adenylic acid preferential ribonuclease. In Lentinula edodes (Shiitake mushroom), this protein is Ribonuclease Le2.